Here is a 284-residue protein sequence, read N- to C-terminus: Two-pore potassium channel 4 (284 aa).

The disordered stretch occupies residues 1 to 21; that stretch reads MEEENLLNENLLHPNESSPEE. Residues 1-31 lie on the Cytoplasmic side of the membrane; sequence MEEENLLNENLLHPNESSPEETQVTTVSKSK. The chain crosses the membrane as a helical span at residues 32 to 52; the sequence is WTILVLAMILLLVYLTFGVCT. Positions 70–89 form an intramembrane region, pore-forming; it reads DAFYFSIVTFSTVGYGDIVP. The chain crosses the membrane as a helical span at residues 93–113; sequence TTKILTIVLVSTGVVFLDYLL. At 114 to 156 the chain is on the cytoplasmic side; it reads NRVVSHVLSLQENAILDRINKTRNRAIRDHIAEDGKIRLKWKL. A helical membrane pass occupies residues 157-177; the sequence is CLAFCAVGLCVGSGALFLHVF. The pore-forming intramembrane region spans 184 to 203; it reads DSVYLSVISVTTVGYGDKTF. Residues 211 to 231 traverse the membrane as a helical segment; it reads FAVFWLLLSTIAMATLFLYLA. At 232-284 the chain is on the cytoplasmic side; it reads EMRIDRTTVMKLPPSESEFIVFKLRESGRISEDDIKQIVREFENLEEVPSSGS.

The protein belongs to the two pore domain potassium channel (TC 1.A.1.7) family. Homodimer. Predominantly expressed in pollen.

It localises to the cell membrane. Voltage-independent, instantaneously activating, potassium-selective plasma membrane ion channel. Open rectifier. Regulated by cytoplasmic pH and extra-cellular calcium. Has some permeability for Rb(+) and NH(4)(+), but none for Na(+) or Li(+). In Arabidopsis thaliana (Mouse-ear cress), this protein is Two-pore potassium channel 4 (TPK4).